The following is a 244-amino-acid chain: Probable transcriptional regulatory protein Aasi_0624 (244 aa).

The protein belongs to the TACO1 family.

The protein resides in the cytoplasm. The protein is Probable transcriptional regulatory protein Aasi_0624 of Amoebophilus asiaticus (strain 5a2).